A 209-amino-acid chain; its full sequence is Ribosomal RNA large subunit methyltransferase E (209 aa).

Positions 63, 65, 83, 99, and 124 each coordinate S-adenosyl-L-methionine. The active-site Proton acceptor is K164.

The protein belongs to the class I-like SAM-binding methyltransferase superfamily. RNA methyltransferase RlmE family.

The protein resides in the cytoplasm. It catalyses the reaction uridine(2552) in 23S rRNA + S-adenosyl-L-methionine = 2'-O-methyluridine(2552) in 23S rRNA + S-adenosyl-L-homocysteine + H(+). Functionally, specifically methylates the uridine in position 2552 of 23S rRNA at the 2'-O position of the ribose in the fully assembled 50S ribosomal subunit. This chain is Ribosomal RNA large subunit methyltransferase E, found in Yersinia pseudotuberculosis serotype O:1b (strain IP 31758).